The following is a 442-amino-acid chain: MENAKMNSLIAQYPLVKDLVALKETTWFNPGTTSLAEGLPYVGLTEQDVQDAHARLSRFAPYLAKAFPETAATGGIIESELVAIPAMQKRLEKEYQQPISGQLLLKKDSHLPISGSIKARGGIYEVLAHAEKLALEAGLLTLDDDYSKLLSPEFKQFFSQYSIAVGSTGNLGLSIGIMSARIGFKVTVHMSADARAWKKAKLRSHGVTVVEYEQDYGVAVEEGRKAAQSDPNCFFIDDENSRTLFLGYSVAGQRLKAQFAQQGRIVDADNPLFVYLPCGVGGGPGGVAFGLKLAFGDHVHCFFAEPTHSPCMLLGVHTGLHDQISVQDIGIDNLTAADGLAVGRASGFVGRAMERLLDGFYTLSDQTMYDMLGWLAQEEGIRLEPSALAGMAGPQRVCASVSYQQMHGFSAEQLRNTTHLVWATGGGMVPEEEMNQYLAKGR.

Lys118 is modified (N6-(pyridoxal phosphate)lysine).

Belongs to the serine/threonine dehydratase family. DsdA subfamily. In terms of assembly, monomer. Requires pyridoxal 5'-phosphate as cofactor.

The catalysed reaction is D-serine = pyruvate + NH4(+). This is D-serine dehydratase from Escherichia coli (strain K12 / MC4100 / BW2952).